The following is a 689-amino-acid chain: Elongation factor G (689 aa).

A tr-type G domain is found at 8–282; it reads LNTRNIGIMA…AVVDYLPSPI (275 aa). Residues 17 to 24, 81 to 85, and 135 to 138 each bind GTP; these read AHIDAGKT, DTPGH, and NKMD.

Belongs to the TRAFAC class translation factor GTPase superfamily. Classic translation factor GTPase family. EF-G/EF-2 subfamily.

The protein localises to the cytoplasm. Catalyzes the GTP-dependent ribosomal translocation step during translation elongation. During this step, the ribosome changes from the pre-translocational (PRE) to the post-translocational (POST) state as the newly formed A-site-bound peptidyl-tRNA and P-site-bound deacylated tRNA move to the P and E sites, respectively. Catalyzes the coordinated movement of the two tRNA molecules, the mRNA and conformational changes in the ribosome. The sequence is that of Elongation factor G from Mycoplasma capricolum subsp. capricolum (strain California kid / ATCC 27343 / NCTC 10154).